The chain runs to 224 residues: Response regulator protein GraR (224 aa).

Residues 2–115 (QILLVEDDNT…VLIAKLQAIY (114 aa)) enclose the Response regulatory domain. Asp51 is subject to 4-aspartylphosphate. The ompR/PhoB-type DNA-binding region spans 126-224 (KRTLTWQDAV…KVGKGYMAHE (99 aa)). Thr128, Thr130, and Thr149 each carry phosphothreonine.

As to quaternary structure, interacts with GraX. Phosphorylated by GraS. Phosphorylated by Stk1; phosphorylation increases the DNA-binding activity of GraR.

It localises to the cytoplasm. In terms of biological role, member of the two-component regulatory system GraR/GraS involved in resistance against cationic antimicrobial peptides (CAMPs). Upon phosphorylation by GraS, functions as a transcription regulator by direct binding to promoter regions of target genes such as adhesins, exoproteins, transporters, toxins, and proteins involved in cell wall synthesis. Down-regulates the expression of many genes involved in RNA and amino acid synthesis or glycolysis. This is Response regulator protein GraR (graR) from Staphylococcus aureus (strain Mu50 / ATCC 700699).